A 1481-amino-acid polypeptide reads, in one-letter code: Cystic fibrosis transmembrane conductance regulator (1481 aa).

At methionine 1–phenylalanine 77 the chain is on the cytoplasmic side. A helical transmembrane segment spans residues phenylalanine 78 to glutamine 98. Residues phenylalanine 81–leucine 365 form the ABC transmembrane type-1 1 domain. At proline 99–tyrosine 122 the chain is on the extracellular side. Residues leucine 123–histidine 146 traverse the membrane as a helical segment. At histidine 147–leucine 195 the chain is on the cytoplasmic side. Residues alanine 196–tryptophan 216 form a helical membrane-spanning segment. The Extracellular portion of the chain corresponds to glutamate 217 to phenylalanine 222. A helical transmembrane segment spans residues threonine 223–methionine 243. Residues methionine 244–lysine 298 lie on the Cytoplasmic side of the membrane. Residues alanine 299–phenylalanine 319 form a helical membrane-spanning segment. The Extracellular portion of the chain corresponds to leucine 320–threonine 339. A helical membrane pass occupies residues isoleucine 340–valine 358. The Cytoplasmic segment spans residues glutamine 359–serine 858. Residues tryptophan 401, glycine 457–threonine 464, and glutamine 492 contribute to the ATP site. An ABC transporter 1 domain is found at asparagine 423 to glycine 645. The S-palmitoyl cysteine moiety is linked to residue cysteine 523. Serine 548 is modified (phosphoserine). Positions threonine 653 to aspartate 831 are disordered R region. Serine 659 and serine 669 each carry phosphoserine; by PKA. Serine 685 carries the phosphoserine; by PKC modification. A Glycyl lysine isopeptide (Lys-Gly) (interchain with G-Cter in ubiquitin) cross-link involves residue lysine 687. At serine 699 the chain carries Phosphoserine; by PKA. Serine 711 is subject to Phosphoserine. Phosphothreonine is present on threonine 716. A phosphoserine; by PKA mark is found at serine 736 and serine 767. The residue at position 790 (serine 790) is a Phosphoserine; by PKC. Phosphoserine; by PKA occurs at positions 795 and 813. The helical transmembrane segment at leucine 859–valine 879 threads the bilayer. The ABC transmembrane type-1 2 domain occupies leucine 859–serine 1155. Over valine 880–isoleucine 918 the chain is Extracellular. 2 N-linked (GlcNAc...) asparagine glycosylation sites follow: asparagine 894 and asparagine 900. A discontinuously helical transmembrane segment spans residues tyrosine 919–histidine 939. The Cytoplasmic segment spans residues threonine 940–threonine 990. A helical transmembrane segment spans residues isoleucine 991–leucine 1011. The Extracellular portion of the chain corresponds to glutamine 1012 to proline 1013. The chain crosses the membrane as a helical span at residues tyrosine 1014–leucine 1034. At histidine 1035–threonine 1095 the chain is on the cytoplasmic side. Residues leucine 1096 to phenylalanine 1116 form a helical membrane-spanning segment. Residues isoleucine 1117–glycine 1130 lie on the Extracellular side of the membrane. Residues isoleucine 1131–isoleucine 1151 traverse the membrane as a helical segment. Over aspartate 1152–leucine 1481 the chain is Cytoplasmic. The ABC transporter 2 domain occupies methionine 1211–proline 1444. Residues tyrosine 1220 and glycine 1245–serine 1252 each bind ATP. The segment at arginine 1387–leucine 1481 is interaction with GORASP2. The S-palmitoyl cysteine moiety is linked to residue cysteine 1396. The segment at histidine 1453–leucine 1481 is disordered. Serine 1457 is modified (phosphoserine). Residues glutamate 1471–leucine 1481 show a composition bias toward acidic residues. The PDZ-binding signature appears at threonine 1479 to leucine 1481.

It belongs to the ABC transporter superfamily. ABCC family. CFTR transporter (TC 3.A.1.202) subfamily. In terms of assembly, monomer; does not require oligomerization for channel activity. May form oligomers in the membrane. Interacts with SLC26A3, SLC26A6 and NHERF1. Interacts with SHANK2. Interacts with MYO6. Interacts (via C-terminus) with GOPC (via PDZ domain); this promotes CFTR internalization and thereby decreases channel activity. Interacts with SLC4A7 through NHERF1. Found in a complex with MYO5B and RAB11A. Interacts with ANO1. Interacts with SLC26A8. Interacts with AHCYL1; the interaction increases CFTR activity. Interacts with CSE1L. The core-glycosylated form interacts with GORASP2 (via PDZ GRASP-type 1 domain) in respone to ER stress. Interacts with MARCHF2; the interaction leads to CFTR ubiqtuitination and degradation. Interacts with ADGRG2. Post-translationally, N-glycosylated. In terms of processing, phosphorylated; cAMP treatment promotes phosphorylation and activates the channel. Dephosphorylation decreases the ATPase activity (in vitro). Phosphorylation at PKA sites activates the channel. Phosphorylation at PKC sites enhances the response to phosphorylation by PKA. Phosphorylated by AMPK; this inhibits channel activity. Ubiquitinated, leading to its degradation in the lysosome. Deubiquitination by USP10 in early endosomes enhances its endocytic recycling to the cell membrane. Ubiquitinated by RNF185 during ER stress. Ubiquitinated by MARCHF2.

The protein resides in the apical cell membrane. The protein localises to the early endosome membrane. Its subcellular location is the cell membrane. It localises to the recycling endosome membrane. It is found in the endoplasmic reticulum membrane. The protein resides in the nucleus. It carries out the reaction ATP + H2O + closed Cl(-) channel = ADP + phosphate + open Cl(-) channel.. It catalyses the reaction chloride(in) = chloride(out). The catalysed reaction is hydrogencarbonate(in) = hydrogencarbonate(out). The enzyme catalyses ATP + H2O = ADP + phosphate + H(+). Epithelial ion channel that plays an important role in the regulation of epithelial ion and water transport and fluid homeostasis. Mediates the transport of chloride ions across the cell membrane. Possesses an intrinsic ATPase activity and utilizes ATP to gate its channel; the passive flow of anions through the channel is gated by cycles of ATP binding and hydrolysis by the ATP-binding domains. The ion channel is also permeable to HCO(3)(-); selectivity depends on the extracellular chloride concentration. Exerts its function also by modulating the activity of other ion channels and transporters. Contributes to the regulation of the pH and the ion content of the epithelial fluid layer. Modulates the activity of the epithelial sodium channel (ENaC) complex, in part by regulating the cell surface expression of the ENaC complex. May regulate bicarbonate secretion and salvage in epithelial cells by regulating the transporter SLC4A7. Can inhibit the chloride channel activity of ANO1. Plays a role in the chloride and bicarbonate homeostasis during sperm epididymal maturation and capacitation. This chain is Cystic fibrosis transmembrane conductance regulator, found in Bos taurus (Bovine).